Consider the following 787-residue polypeptide: Phenylalanine--tRNA ligase beta subunit (787 aa).

Residues 38 to 151 enclose the tRNA-binding domain; that stretch reads GQDPAPFVVA…SDYEVGDSFF (114 aa). Positions 397-474 constitute a B5 domain; sequence SEGRVISFNP…RMHGYDKVQE (78 aa). Aspartate 452, aspartate 458, glutamate 461, and glutamate 462 together coordinate Mg(2+). The FDX-ACB domain maps to 694 to 785; it reads HKYQPVKRDF…VAQKLGGELR (92 aa).

The protein belongs to the phenylalanyl-tRNA synthetase beta subunit family. Type 1 subfamily. In terms of assembly, tetramer of two alpha and two beta subunits. Requires Mg(2+) as cofactor.

It localises to the cytoplasm. The enzyme catalyses tRNA(Phe) + L-phenylalanine + ATP = L-phenylalanyl-tRNA(Phe) + AMP + diphosphate + H(+). The polypeptide is Phenylalanine--tRNA ligase beta subunit (Anaplasma marginale (strain St. Maries)).